Here is a 271-residue protein sequence, read N- to C-terminus: Mannosyl-3-phosphoglycerate phosphatase (271 aa).

The active-site Nucleophile is the Asp13. Mg(2+) contacts are provided by Asp13, Asp15, and Asp214.

This sequence belongs to the HAD-like hydrolase superfamily. MPGP family. Mg(2+) serves as cofactor.

It localises to the cytoplasm. The enzyme catalyses 2-O-(alpha-D-mannosyl)-3-phosphoglycerate + H2O = (2R)-2-O-(alpha-D-mannosyl)-glycerate + phosphate. The sequence is that of Mannosyl-3-phosphoglycerate phosphatase from Escherichia coli O139:H28 (strain E24377A / ETEC).